A 1129-amino-acid chain; its full sequence is MPTPVAAARQCLSPAAVPALDAAVASARRRAHAQTTSLHLISSLLAPPAPPLLRDALARARSAAYSPRVQLKALDLCFAVSLDRLPSVSASSSSGAADEPPVSNSLMAAIKRSQANQRRNPDTFHFYHQAATAQTPAAVKVELSHLVLAILDDPVVSRVFAEAGFRSGDIKLAILRPAPPMPLLGRLPTRTRPPPLFLCSFAAADDADVPSPAGNLAGAGEENCRRIAEILSRGRNPMLVGVGAASAADDFAAASPYRIIHVDPNTIDRSDLGVAAAMASATSGLIISIGDLKQLVPDEDAEAQENGRRVVAEVTRVLEAHSKVGRVWVMGWSATYETYLAFLSKFPLVDKDWDLQLLPITAVHAAPAAAGPAAAGGLMPPATTVAAFSKPAASLMDSFVPFGGFLCDNYEENSLTANSCPQALRCQQCNDKYEQEVATIISASGITAEDHHQGGLPSLLQNGSMMGPNNGFDPVKVRDDRMVLNSKILNLQKKWNEYCLRLHQDCQRINRDPYKPFPRYIGVPADKERSANPSKGSESIGVQKDVIKPCAVSAVHSSSTARPISSPSVTNKRNEDLVLNLQARHSKSDENLQERGMQSQHGTLSNADNPDDHASPSSAAPVETDLVLCTPRDCSSKGSSSTCSKRVEDSERSVHLVPKKVDDLNLKHPQLSVQPNSCSWSSINVGKTSHSTLHSVASGGFSAFGQWQKRSPLAAQNSDLSNYKLLVERLFKVVGRQEEAVSAICESIVRCRSTESRRGPSRNDIWLCFHGSDSMAKKRIAVALAELMHGSKENLIYLDLNLQDWDDSSFRGKTGIDCIVEQLSKKRRSVLFLDNIDRADCLVQDSLSDAIKSGRFQDMRGKVVDINDSIVVLSRSMIHGSKNGLEEGLSFSEEKILATRGHRLKILVEPGRAITSGCPSGKVVVSPRHFLTKIQASLCSGSISKRKLSMSDDQEKLQESPSSLKRLHRTSSIPFDLNLPVDEDEPFDADDDSSSHENSYGNTEKSIDALLHSVDGSINFKPFDFDKLADDMLQEFSNILRKNLGAECMLEIDVGAMEQILAAAWKSEDKGPVQTWLEQVFARSLDELKLKYKHVSSSTLRLVPCEDTLPTVKGDGLGVLLPPRIILDC.

Residues 8–180 form the Clp R domain; that stretch reads ARQCLSPAAV…KLAILRPAPP (173 aa). 2 repeat regions span residues 12–85 and 102–180; these read LSPA…LDRL and VSNS…PAPP. The disordered stretch occupies residues 519 to 573; that stretch reads RYIGVPADKERSANPSKGSESIGVQKDVIKPCAVSAVHSSSTARPISSPSVTNKR. Positions 557 to 568 are enriched in low complexity; it reads SSSTARPISSPS. The short motif at 577 to 581 is the EAR 1 element; the sequence is LVLNL. The disordered stretch occupies residues 587–654; the sequence is KSDENLQERG…KRVEDSERSV (68 aa). Residues 596-608 are compositionally biased toward polar residues; the sequence is GMQSQHGTLSNAD. The span at 645 to 654 shows a compositional bias: basic and acidic residues; the sequence is KRVEDSERSV. Short sequence motifs (EAR) lie at residues 798–802 and 975–980; these read LDLNL and FDLNLP. The disordered stretch occupies residues 975-1001; sequence FDLNLPVDEDEPFDADDDSSSHENSYG. A compositionally biased stretch (acidic residues) spans 981-992; sequence VDEDEPFDADDD.

This sequence belongs to the ClpA/ClpB family. Post-translationally, polyubiquitinated. Strigolactone, but not karrikin, triggers rapid SCF(D3)-dependent degradation via the proteasome.

Repressor of strigolactones (SL) signaling. Subjected to a negative feedback control of SL signaling. The sequence is that of Protein DWARF 53-LIKE from Oryza sativa subsp. japonica (Rice).